Consider the following 662-residue polypeptide: Aprataxin-like protein (662 aa).

An HIT domain is found at 4–108 (SSALIKDISK…ISKDFVSTSL (105 aa)). The C2H2-type zinc finger occupies 381-403 (LRCNQCEFVTNMLLDLKAHLYQH). Residues 482-662 (KNINGPSVNM…PAPPSNSKPS (181 aa)) are disordered. Residues 490 to 500 (NMMNQNNPNNP) are compositionally biased toward low complexity. Composition is skewed to polar residues over residues 501–513 (FRNT…QSQK) and 560–569 (GHQQFPNASS). The segment covering 570–582 (VGGGQTGLPGQGQ) has biased composition (gly residues). Polar residues predominate over residues 588 to 599 (WNSNKIFNQQNR). The segment covering 600–626 (QNTVQAQPQAQNQQTNQQQIQNSNKNQ) has biased composition (low complexity). A compositionally biased stretch (pro residues) spans 653-662 (PAPPSNSKPS).

It localises to the nucleus. DNA-binding protein involved in single-strand DNA break repair, double-strand DNA break repair and base excision repair. Resolves abortive DNA ligation intermediates formed either at base excision sites, or when DNA ligases attempt to repair non-ligatable breaks induced by reactive oxygen species. Catalyzes the release of adenylate groups covalently linked to 5'-phosphate termini, resulting in the production of 5'-phosphate termini that can be efficiently rejoined. The chain is Aprataxin-like protein from Drosophila melanogaster (Fruit fly).